A 449-amino-acid polypeptide reads, in one-letter code: Signal recognition particle protein (449 aa).

Residues 109–116 (GLQGSGKT), 191–195 (DTAGR), and 249–252 (SRID) each bind GTP.

This sequence belongs to the GTP-binding SRP family. SRP54 subfamily. In terms of assembly, part of the signal recognition particle protein translocation system, which is composed of SRP and FtsY. SRP is a ribonucleoprotein composed of Ffh and a 4.5S RNA molecule.

It localises to the cytoplasm. It carries out the reaction GTP + H2O = GDP + phosphate + H(+). In terms of biological role, involved in targeting and insertion of nascent membrane proteins into the cytoplasmic membrane. Binds to the hydrophobic signal sequence of the ribosome-nascent chain (RNC) as it emerges from the ribosomes. The SRP-RNC complex is then targeted to the cytoplasmic membrane where it interacts with the SRP receptor FtsY. Interaction with FtsY leads to the transfer of the RNC complex to the Sec translocase for insertion into the membrane, the hydrolysis of GTP by both Ffh and FtsY, and the dissociation of the SRP-FtsY complex into the individual components. This Rickettsia bellii (strain RML369-C) protein is Signal recognition particle protein.